Here is a 445-residue protein sequence, read N- to C-terminus: Phosphoglucosamine mutase (445 aa).

The active-site Phosphoserine intermediate is the S99. Mg(2+) is bound by residues S99, D242, D244, and D246. S99 carries the post-translational modification Phosphoserine.

Belongs to the phosphohexose mutase family. Mg(2+) is required as a cofactor. Activated by phosphorylation.

The enzyme catalyses alpha-D-glucosamine 1-phosphate = D-glucosamine 6-phosphate. Catalyzes the conversion of glucosamine-6-phosphate to glucosamine-1-phosphate. In Nitratiruptor sp. (strain SB155-2), this protein is Phosphoglucosamine mutase.